The chain runs to 576 residues: Lysine--tRNA ligase (576 aa).

Glu-413 and Glu-420 together coordinate Mg(2+).

It belongs to the class-II aminoacyl-tRNA synthetase family. As to quaternary structure, homodimer. Mg(2+) is required as a cofactor.

The protein localises to the cytoplasm. The enzyme catalyses tRNA(Lys) + L-lysine + ATP = L-lysyl-tRNA(Lys) + AMP + diphosphate. This is Lysine--tRNA ligase from Bacteroides thetaiotaomicron (strain ATCC 29148 / DSM 2079 / JCM 5827 / CCUG 10774 / NCTC 10582 / VPI-5482 / E50).